Here is a 277-residue protein sequence, read N- to C-terminus: NH(3)-dependent NAD(+) synthetase (277 aa).

Position 36–43 (36–43 (GLSGGIDS)) interacts with ATP. Asp-42 serves as a coordination point for Mg(2+). Residue Arg-118 participates in deamido-NAD(+) binding. Thr-138 contacts ATP. Glu-143 is a binding site for Mg(2+). ATP contacts are provided by Lys-167 and Ser-189.

It belongs to the NAD synthetase family. In terms of assembly, homodimer.

It catalyses the reaction deamido-NAD(+) + NH4(+) + ATP = AMP + diphosphate + NAD(+) + H(+). Its pathway is cofactor biosynthesis; NAD(+) biosynthesis; NAD(+) from deamido-NAD(+) (ammonia route): step 1/1. In terms of biological role, catalyzes the ATP-dependent amidation of deamido-NAD to form NAD. Uses ammonia as a nitrogen source. This is NH(3)-dependent NAD(+) synthetase from Chlorobium phaeobacteroides (strain DSM 266 / SMG 266 / 2430).